The chain runs to 253 residues: Blue-light photoreceptor (253 aa).

Positions 6 to 79 constitute a PAS domain; it reads KFDVILKALN…AKIRHAINEK (74 aa). S-4a-FMN cysteine is present on cysteine 56. The PAC domain maps to 80 to 133; sequence STANVLLKNYRKNGTSFMNELTIEPIYDDNDHLYFVGIQKDVTTEHNYQLELEK. In terms of domain architecture, STAS spans 142 to 253; that stretch reads STPIVPIKEN…STIKEALQFY (112 aa).

In terms of processing, FMN binds covalently to cysteine after exposure to blue light and this bond is spontaneously broken in the dark.

Functionally, exhibits the same spectroscopical features and blue-light induced photochemistry as plants phototropins, with the reversible formation of a blue-shifted photoproduct, assigned to an FMN-cysteine thiol adduct. Positive regulator in the activation of the general stress transcription factor sigma-B. The protein is Blue-light photoreceptor of Listeria innocua serovar 6a (strain ATCC BAA-680 / CLIP 11262).